Here is a 272-residue protein sequence, read N- to C-terminus: Homeobox protein Hox-D12 (272 aa).

Residues 204–263 constitute a DNA-binding region (homeobox); it reads SRRKRKPYTKQQIAELENEFLANEFINRQKRKELSDRLNLSDQQVKIWFQNRRMKKKRLV.

The protein belongs to the Abd-B homeobox family.

It is found in the nucleus. Functionally, sequence-specific transcription factor which is part of a developmental regulatory system that provides cells with specific positional identities on the anterior-posterior axis. The sequence is that of Homeobox protein Hox-D12 (HOXD12) from Heterodontus francisci (Horn shark).